The sequence spans 251 residues: 14-3-3-like protein (251 aa).

Belongs to the 14-3-3 family. Most abundant in roots and flowers.

This is 14-3-3-like protein from Nicotiana tabacum (Common tobacco).